The chain runs to 421 residues: Lipid II:glycine glycyltransferase (421 aa).

The protein belongs to the FemABX family. As to quaternary structure, monomer.

It localises to the cytoplasm. It catalyses the reaction beta-D-GlcNAc-(1-&gt;4)-Mur2Ac(oyl-L-Ala-D-isoglutaminyl-L-Lys-D-Ala-D-Ala)-di-trans,octa-cis-undecaprenyl diphosphate + glycyl-tRNA(Gly) = beta-D-GlcNAc-(1-&gt;4)-Mur2Ac(oyl-L-Ala-D-isoglutaminyl-L-Lys-(N(6)-Gly)-D-Ala-D-Ala)-di-trans,octa-cis-undecaprenyl diphosphate + tRNA(Gly) + H(+). Catalyzes the incorporation of the first glycine of the pentaglycine interpeptide bridge, which is characteristic of the S.aureus peptidoglycan. This glycine is added to the epsilon-amino group of the L-lysine of the membrane-bound lipid II intermediate (GlcNAc-(beta-1,4)-N-acetylmuramic acid(-L-Ala-D-iGln-L-Lys-D-Ala-D-Ala)-pyrophosphoryl-undecaprenol), using glycyl-tRNA(Gly) as donor, in a ribosome-independent mechanism. Involved in methicillin resistance. The chain is Lipid II:glycine glycyltransferase (femX) from Staphylococcus aureus (strain USA300).